A 338-amino-acid chain; its full sequence is Ferredoxin--NADP reductase (338 aa).

The FAD site is built by D35, Q43, Y48, A88, F122, D289, and T330.

Belongs to the ferredoxin--NADP reductase type 2 family. Homodimer. The cofactor is FAD.

The enzyme catalyses 2 reduced [2Fe-2S]-[ferredoxin] + NADP(+) + H(+) = 2 oxidized [2Fe-2S]-[ferredoxin] + NADPH. This is Ferredoxin--NADP reductase from Ehrlichia canis (strain Jake).